The following is a 1795-amino-acid chain: Type III effector AvrE (1795 aa).

Over residues 1–18 the composition is skewed to polar residues; it reads MQSPSIHRNTGSIIQPTV. Residues 1–227 are disordered; the sequence is MQSPSIHRNT…PPREPMLWRS (227 aa). Low complexity predominate over residues 60 to 75; the sequence is KSKAPQQKAATPPTAK. Polar residues-rich tracts occupy residues 97 to 109 and 117 to 127; these read GFSN…THSA and HPNQASSSGAQ. Basic and acidic residues predominate over residues 129 to 154; that stretch reads HEIHPEAAPRKNLRVRFDLPQDRLER. A compositionally biased stretch (polar residues) spans 174 to 191; it reads ATRQFRSPDSHLQGSDGT. The span at 203-215 shows a compositional bias: low complexity; the sequence is PSSSGSKIGDSDG. Short sequence motifs (wxxxE) lie at residues 393–397 and 829–833; these read WKIPE and WQRFE. The disordered stretch occupies residues 1461–1488; sequence QIGGSHTAPTGTPASAPGPTPASQTAAN. Positions 1467–1487 are enriched in low complexity; the sequence is TAPTGTPASAPGPTPASQTAA. Residues 1787–1790 carry the ERMRS motif; the sequence is KKEG.

Belongs to the AvrE family. As to quaternary structure, in planta interaction assays, interacts with the A.thaliana protein phosphatase 2A (PP2A) via direct interaction/association with specific B' regulatory subunits.

The protein localises to the secreted. The protein resides in the host cell. Its subcellular location is the host cell membrane. Its activity is regulated as follows. Polyamidoamine dendrimers inhibit channel and virulence activities. Major virulence factor that may function as a water- and solute-permeable channel dedicated to creating osmotic/water potential perturbation and a water- and nutrient-rich apoplast in which bacteria multiply within the infected plant tissues. Expression in Xenopus oocytes results in inward and outward currents, permeability to water and osmolarity-dependent oocyte swelling and bursting. Functionally, elicits cell death in host tomato leaves and in non-host Nicotiana tabacum leaves. Acts within plant cells and promotes lesion formation. The combined action of AvrE and HopM1 is particularly important in promoting bacterial growth in plants. Contributes to the down-regulation of a specific subset of A.thaliana genes during infection, including NHL13, which is required for antibacterial immunity. This Pseudomonas syringae pv. tomato (strain ATCC BAA-871 / DC3000) protein is Type III effector AvrE.